Here is a 331-residue protein sequence, read N- to C-terminus: Beta-ketoacyl-[acyl-carrier-protein] synthase III (331 aa).

Active-site residues include C116 and H256. The ACP-binding stretch occupies residues 257 to 261 (QANTR). N286 is a catalytic residue.

The protein belongs to the thiolase-like superfamily. FabH family. As to quaternary structure, homodimer.

The protein localises to the cytoplasm. The catalysed reaction is malonyl-[ACP] + acetyl-CoA + H(+) = 3-oxobutanoyl-[ACP] + CO2 + CoA. It functions in the pathway lipid metabolism; fatty acid biosynthesis. In terms of biological role, catalyzes the condensation reaction of fatty acid synthesis by the addition to an acyl acceptor of two carbons from malonyl-ACP. Catalyzes the first condensation reaction which initiates fatty acid synthesis and may therefore play a role in governing the total rate of fatty acid production. Possesses both acetoacetyl-ACP synthase and acetyl transacylase activities. Its substrate specificity determines the biosynthesis of branched-chain and/or straight-chain of fatty acids. This is Beta-ketoacyl-[acyl-carrier-protein] synthase III from Caldanaerobacter subterraneus subsp. tengcongensis (strain DSM 15242 / JCM 11007 / NBRC 100824 / MB4) (Thermoanaerobacter tengcongensis).